The following is a 176-amino-acid chain: 3-hydroxydecanoyl-[acyl-carrier-protein] dehydratase (176 aa).

The active site involves His-71.

It belongs to the thioester dehydratase family. FabA subfamily. In terms of assembly, homodimer.

The protein localises to the cytoplasm. The catalysed reaction is a (3R)-hydroxyacyl-[ACP] = a (2E)-enoyl-[ACP] + H2O. It carries out the reaction (3R)-hydroxydecanoyl-[ACP] = (2E)-decenoyl-[ACP] + H2O. It catalyses the reaction (2E)-decenoyl-[ACP] = (3Z)-decenoyl-[ACP]. It functions in the pathway lipid metabolism; fatty acid biosynthesis. Its function is as follows. Necessary for the introduction of cis unsaturation into fatty acids. Catalyzes the dehydration of (3R)-3-hydroxydecanoyl-ACP to E-(2)-decenoyl-ACP and then its isomerization to Z-(3)-decenoyl-ACP. Can catalyze the dehydratase reaction for beta-hydroxyacyl-ACPs with saturated chain lengths up to 16:0, being most active on intermediate chain length. The chain is 3-hydroxydecanoyl-[acyl-carrier-protein] dehydratase from Rhodopseudomonas palustris (strain BisB18).